Reading from the N-terminus, the 565-residue chain is MRRSLSDLIDQGRGKAPADLVLKNGRIFDLVTGELVQTDVAICGDRIVGTFGTYEGRREIDCRGRILVPGFIDTHLHVESSLVTPFEFDRCVTPRGITTAICDPHEIANVCGLEGIRYFLEAAEHLVMDLRVQLSSCVPSTHMETAGATLEAADLVPLMDHPRVIGLAEFMNFPGVLAKDAGCLAKLEAFRGRHIDGHAPLLRGKDLNGYIAAGIRTEHEATTAEEALEKLRKGMRVLIREGSVSRDLEALVPLLTERHSPYLCLCTDDRNPLDIAEHGHIDHMIRTAIRLGAPPLAVYRAASLSAAEAFGLKDRGLIAPGKRADVVALDSLEGCHAGLVVAGGVVVDAGAFAARGTVEPVARASVRVAPVEAAAFRCPGNRAETPVIGILPGKIITEHLTDAIEPVDGDKRPDPSRDLARIAVIERHGRNGGRAVGFVRGFGMRRGAIASTVCHDHHNLAVVGVDYADMALAANRLREIEGGFAVAAEGEILAELALPVGGLMSLRPFEEVRDALVALREAARGLGVTLEEPFLQLAFLALPVIPHLKITDRGIVDVDRFEILP.

It belongs to the metallo-dependent hydrolases superfamily. Adenine deaminase family. Mn(2+) serves as cofactor.

The enzyme catalyses adenine + H2O + H(+) = hypoxanthine + NH4(+). The polypeptide is Adenine deaminase (Cereibacter sphaeroides (strain ATCC 17025 / ATH 2.4.3) (Rhodobacter sphaeroides)).